The primary structure comprises 785 residues: uncharacterized protein (785 aa).

The segment covering 53 to 65 has biased composition (polar residues); sequence KNTLTGSHGSNDL. A disordered region spans residues 53-162; that stretch reads KNTLTGSHGS…RKAADEQGPI (110 aa). Residues 66 to 79 show a composition bias toward acidic residues; sequence ATDESLDSPEDEEA. A compositionally biased stretch (polar residues) spans 81 to 94; that stretch reads SPLQLGTPTSTTSG. S215 is subject to Phosphoserine. Disordered regions lie at residues 571-590 and 631-657; these read KVVD…TSVN and DSSG…RIQF. Acidic residues predominate over residues 575 to 584; the sequence is SDDEESDSDE. S667 is subject to Phosphoserine. The interval 693 to 785 is disordered; that stretch reads DPKMKFTSHP…FGSIFKKVFG (93 aa). The span at 725 to 739 shows a compositional bias: basic residues; sequence RKAHHHHHHHNHVSR. Over residues 776-785 the composition is skewed to low complexity; it reads FGSIFKKVFG.

This is an uncharacterized protein from Saccharomyces cerevisiae (strain ATCC 204508 / S288c) (Baker's yeast).